Reading from the N-terminus, the 183-residue chain is MPLSVEQALANFSQRYVEAWKAQHDCLPINEELVGLASPCIEETRDLEISWQPIVRDEAIRLHNIEQGIELDLHDDFHAFYGTQYSADMTAKFEDMNIELLQVWSDEDLERLQGNMLGHLVMQRRLKLVPTLFVAVTDDEMEVVSICNQSGEVILERVGTKNRTVLAANMAEFLNKLEPVIAA.

This sequence belongs to the Syd family.

Its subcellular location is the cell inner membrane. Functionally, interacts with the SecY protein in vivo. May bind preferentially to an uncomplexed state of SecY, thus functioning either as a chelating agent for excess SecY in the cell or as a regulatory factor that negatively controls the translocase function. The polypeptide is Protein Syd (Aliivibrio fischeri (strain MJ11) (Vibrio fischeri)).